The primary structure comprises 146 residues: Hemoglobin subunit beta (146 aa).

A Globin domain is found at 2 to 146 (HWSAEEKQLI…VAHALARKYH (145 aa)). Heme b-binding residues include His-63 and His-92.

The protein belongs to the globin family. In terms of assembly, heterotetramer of two alpha chains and two beta chains. As to expression, red blood cells.

In terms of biological role, involved in oxygen transport from the lung to the various peripheral tissues. The protein is Hemoglobin subunit beta (HBB) of Phoenicopterus ruber (American flamingo).